Here is a 201-residue protein sequence, read N- to C-terminus: Homeobox protein goosecoid-2 (201 aa).

3 disordered regions span residues 1-55, 95-124, and 179-201; these read MATA…PEAP, PATP…RRTR, and RHQK…KESC. Low complexity predominate over residues 95–106; that stretch reads PATPSPLTAPRA. The segment at residues 123 to 182 is a DNA-binding region (homeobox); that stretch reads TRRHRTIFSEEQLQALEALFVQNQYPDVGTRERLAVRIRLREERVEVWFKNRRAKWRHQK.

Belongs to the paired homeobox family. Bicoid subfamily. In terms of tissue distribution, expressed in adult testis.

The protein resides in the nucleus. Its function is as follows. May have a role in development. May regulate its own transcription. May bind the bicoid consensus sequence TAATCC. In Mus musculus (Mouse), this protein is Homeobox protein goosecoid-2 (Gsc2).